The sequence spans 341 residues: uncharacterized protein (341 aa).

Residues 153 to 179 (AYTLSEKVMNAEREAEETRETIIREAH) adopt a coiled-coil conformation. Over residues 319–335 (EQLQNPAPESAPSTSKT) the composition is skewed to polar residues. The interval 319-341 (EQLQNPAPESAPSTSKTLRSKNP) is disordered.

This is an uncharacterized protein from Coxiella burnetii (strain RSA 493 / Nine Mile phase I).